A 249-amino-acid polypeptide reads, in one-letter code: Probable transcriptional regulatory protein CYB_1350 (249 aa).

This sequence belongs to the TACO1 family.

The protein resides in the cytoplasm. This chain is Probable transcriptional regulatory protein CYB_1350, found in Synechococcus sp. (strain JA-2-3B'a(2-13)) (Cyanobacteria bacterium Yellowstone B-Prime).